We begin with the raw amino-acid sequence, 219 residues long: MGQKIHPIGFRLGITQKHRSCWFANPKQYPTLLQEDHLIRQYIEKNLSNAGIAQIYIQRKADRIELELRTARPGVVVGRGGRGIEVLRKGLKDLLGEQKQIRINVIEVKQIDAEAALIGEFITQQLERRVAFRRIVRKAITRAQRRGIEGIKIQISGRLNGAEIARSEWSREGRVPLQTLRAEIDYSYKRAQTIYGVLGVKVWIFKGEVIPGNPTEISE.

Residues 39-109 (IRQYIEKNLS…QIRINVIEVK (71 aa)) enclose the KH type-2 domain.

The protein belongs to the universal ribosomal protein uS3 family. Part of the 30S ribosomal subunit.

Its subcellular location is the plastid. The protein localises to the cyanelle. The chain is Small ribosomal subunit protein uS3c (rps3) from Cyanophora paradoxa.